Reading from the N-terminus, the 237-residue chain is MNRATPRRRRWRIGELAEATGVTVRTLHHYEHTGLLAATERTEGGHRMYDRESGQRVHQIRALRELGFSLVEIRKAMEGTTSLTDLLRKHLERIEVQVARTTLLRDRLRNMTIDSEAQVSVDELPATLNAMSRAETRSQTSRCTCNLAAEREDRWRRIRDDLRDCMDGGEHPCGERAKAVAVAARLLISEIAGDDSRVSMILKVLARLSAPRSLAGWDPCLMQYLDLALGGLEDQPY.

An HTH merR-type domain is found at 10 to 79; that stretch reads RWRIGELAEA…LVEIRKAMEG (70 aa). The segment at residues 13–32 is a DNA-binding region (H-T-H motif); sequence IGELAEATGVTVRTLHHYEH.

Its function is as follows. Involved in genotype-specific nodulation of soybeans. The protein is Nodulation protein NolA (nolA) of Bradyrhizobium diazoefficiens (strain JCM 10833 / BCRC 13528 / IAM 13628 / NBRC 14792 / USDA 110).